The chain runs to 91 residues: Putative regulatory protein DSY2730 (91 aa).

The protein belongs to the RemA family.

This is Putative regulatory protein DSY2730 from Desulfitobacterium hafniense (strain Y51).